Reading from the N-terminus, the 99-residue chain is NADH-ubiquinone oxidoreductase chain 4L (99 aa).

3 helical membrane passes run 5–25, 30–50, and 65–85; these read IITA…GFII, ILLL…IIIC, and LYIL…LVLF.

This sequence belongs to the complex I subunit 4L family.

Its subcellular location is the mitochondrion membrane. The catalysed reaction is a ubiquinone + NADH + 5 H(+)(in) = a ubiquinol + NAD(+) + 4 H(+)(out). In terms of biological role, core subunit of the mitochondrial membrane respiratory chain NADH dehydrogenase (Complex I) that is believed to belong to the minimal assembly required for catalysis. Complex I functions in the transfer of electrons from NADH to the respiratory chain. The immediate electron acceptor for the enzyme is believed to be ubiquinone. The protein is NADH-ubiquinone oxidoreductase chain 4L (ND4L) of Allomyces macrogynus.